A 464-amino-acid polypeptide reads, in one-letter code: ATP-dependent protease ATPase subunit HslU (464 aa).

Residues Val18, 60-65, Asp277, Glu342, and Arg414 each bind ATP; that span reads GVGKTE.

It belongs to the ClpX chaperone family. HslU subfamily. In terms of assembly, a double ring-shaped homohexamer of HslV is capped on each side by a ring-shaped HslU homohexamer. The assembly of the HslU/HslV complex is dependent on binding of ATP.

The protein resides in the cytoplasm. In terms of biological role, ATPase subunit of a proteasome-like degradation complex; this subunit has chaperone activity. The binding of ATP and its subsequent hydrolysis by HslU are essential for unfolding of protein substrates subsequently hydrolyzed by HslV. HslU recognizes the N-terminal part of its protein substrates and unfolds these before they are guided to HslV for hydrolysis. In Lactobacillus delbrueckii subsp. bulgaricus (strain ATCC 11842 / DSM 20081 / BCRC 10696 / JCM 1002 / NBRC 13953 / NCIMB 11778 / NCTC 12712 / WDCM 00102 / Lb 14), this protein is ATP-dependent protease ATPase subunit HslU.